Consider the following 103-residue polypeptide: Large ribosomal subunit protein eL43 (103 aa).

The protein belongs to the eukaryotic ribosomal protein eL43 family.

The sequence is that of Large ribosomal subunit protein eL43 (RPL37A) from Tetrahymena thermophila (strain SB210).